The chain runs to 458 residues: UDP-N-acetylmuramate--L-alanine ligase (458 aa).

Residue 115-121 (GSHGKTT) participates in ATP binding.

This sequence belongs to the MurCDEF family.

The protein resides in the cytoplasm. The catalysed reaction is UDP-N-acetyl-alpha-D-muramate + L-alanine + ATP = UDP-N-acetyl-alpha-D-muramoyl-L-alanine + ADP + phosphate + H(+). The protein operates within cell wall biogenesis; peptidoglycan biosynthesis. Cell wall formation. This chain is UDP-N-acetylmuramate--L-alanine ligase, found in Anaeromyxobacter sp. (strain Fw109-5).